The following is a 190-amino-acid chain: 6,7-dimethyl-8-ribityllumazine synthase (190 aa).

5-amino-6-(D-ribitylamino)uracil-binding positions include Phe23, 61 to 63 (SFE), and 85 to 87 (AVI). 90-91 (QT) contacts (2S)-2-hydroxy-3-oxobutyl phosphate. Residue His93 is the Proton donor of the active site. Phe118 is a 5-amino-6-(D-ribitylamino)uracil binding site. Residue Arg132 participates in (2S)-2-hydroxy-3-oxobutyl phosphate binding.

This sequence belongs to the DMRL synthase family.

The catalysed reaction is (2S)-2-hydroxy-3-oxobutyl phosphate + 5-amino-6-(D-ribitylamino)uracil = 6,7-dimethyl-8-(1-D-ribityl)lumazine + phosphate + 2 H2O + H(+). It functions in the pathway cofactor biosynthesis; riboflavin biosynthesis; riboflavin from 2-hydroxy-3-oxobutyl phosphate and 5-amino-6-(D-ribitylamino)uracil: step 1/2. Catalyzes the formation of 6,7-dimethyl-8-ribityllumazine by condensation of 5-amino-6-(D-ribitylamino)uracil with 3,4-dihydroxy-2-butanone 4-phosphate. This is the penultimate step in the biosynthesis of riboflavin. The polypeptide is 6,7-dimethyl-8-ribityllumazine synthase (Nostoc sp. (strain PCC 7120 / SAG 25.82 / UTEX 2576)).